The primary structure comprises 668 residues: tRNA 5-methylaminomethyl-2-thiouridine biosynthesis bifunctional protein MnmC (668 aa).

A tRNA (mnm(5)s(2)U34)-methyltransferase region spans residues 1-245; the sequence is MKHYSIQPAN…KREMLCGVME (245 aa). Residues 270-668 are FAD-dependent cmnm(5)s(2)U34 oxidoreductase; it reads IGGGIACALL…LLKGKAVKAG (399 aa).

This sequence in the N-terminal section; belongs to the methyltransferase superfamily. tRNA (mnm(5)s(2)U34)-methyltransferase family. The protein in the C-terminal section; belongs to the DAO family. It depends on FAD as a cofactor.

The protein resides in the cytoplasm. It catalyses the reaction 5-aminomethyl-2-thiouridine(34) in tRNA + S-adenosyl-L-methionine = 5-methylaminomethyl-2-thiouridine(34) in tRNA + S-adenosyl-L-homocysteine + H(+). Functionally, catalyzes the last two steps in the biosynthesis of 5-methylaminomethyl-2-thiouridine (mnm(5)s(2)U) at the wobble position (U34) in tRNA. Catalyzes the FAD-dependent demodification of cmnm(5)s(2)U34 to nm(5)s(2)U34, followed by the transfer of a methyl group from S-adenosyl-L-methionine to nm(5)s(2)U34, to form mnm(5)s(2)U34. In Shigella boydii serotype 4 (strain Sb227), this protein is tRNA 5-methylaminomethyl-2-thiouridine biosynthesis bifunctional protein MnmC.